The following is a 212-amino-acid chain: MKLYNFWRSGTSHRLRIALNLKGVPYEYLAVHLGKEEHLKDAFKALNPQQLVPALDTGAQVLIQSPAIIEWLEEQYPTPALLPADADGRQRVRALAAIVGCDIHPINNRRILEYLRKTFGADEAAINAWCGTWISAGFDAYEALLAVDPKRGRYSFGDTPTLADCYLVPQVESARRFQVDLTPYPLIRAVDAACGELDAFRRAAPAAQPDSA.

In terms of domain architecture, GST N-terminal spans 1–80; sequence MKLYNFWRSG…WLEEQYPTPA (80 aa). Glutathione-binding positions include 9 to 11, H38, V52, 64 to 65, 102 to 104, 108 to 110, and R176; these read SGT, QS, DIH, and NRR. One can recognise a GST C-terminal domain in the interval 85–212; sequence DADGRQRVRA…AAPAAQPDSA (128 aa).

The protein belongs to the GST superfamily. Zeta family. In terms of assembly, homodimer. Glutathione serves as cofactor.

It carries out the reaction 3-maleylpyruvate = 3-fumarylpyruvate. Its pathway is aromatic compound metabolism; naphthalene degradation. In terms of biological role, catalyzes the GSH-dependent isomerization of maleylpyruvate to fumarylpyruvate which is subsequently processed by NagK to form pyruvate and fumarate. The polypeptide is Maleylpyruvate isomerase (Ralstonia sp).